Here is a 438-residue protein sequence, read N- to C-terminus: PHAF1 protein CG7083 (438 aa).

It belongs to the PHAF1 family.

It localises to the cytoplasm. The protein localises to the preautophagosomal structure. May play a regulatory role in autophagic activity. The sequence is that of PHAF1 protein CG7083 from Drosophila melanogaster (Fruit fly).